The sequence spans 348 residues: Phenylalanine--tRNA ligase alpha subunit (348 aa).

A Mg(2+)-binding site is contributed by E262.

The protein belongs to the class-II aminoacyl-tRNA synthetase family. Phe-tRNA synthetase alpha subunit type 1 subfamily. As to quaternary structure, tetramer of two alpha and two beta subunits. The cofactor is Mg(2+).

It is found in the cytoplasm. It carries out the reaction tRNA(Phe) + L-phenylalanine + ATP = L-phenylalanyl-tRNA(Phe) + AMP + diphosphate + H(+). This is Phenylalanine--tRNA ligase alpha subunit from Streptococcus pneumoniae (strain 70585).